Here is a 107-residue protein sequence, read N- to C-terminus: UPF0122 protein MYPE4850 (107 aa).

It belongs to the UPF0122 family.

Its function is as follows. Might take part in the signal recognition particle (SRP) pathway. This is inferred from the conservation of its genetic proximity to ftsY/ffh. May be a regulatory protein. This Malacoplasma penetrans (strain HF-2) (Mycoplasma penetrans) protein is UPF0122 protein MYPE4850.